An 845-amino-acid polypeptide reads, in one-letter code: Protein translocase subunit SecA (845 aa).

ATP contacts are provided by residues Q85, G103 to T107, and D492. The disordered stretch occupies residues R787 to A845. Zn(2+) contacts are provided by C829, C831, C840, and H841. The segment covering K835–A845 has biased composition (basic residues).

It belongs to the SecA family. In terms of assembly, monomer and homodimer. Part of the essential Sec protein translocation apparatus which comprises SecA, SecYEG and auxiliary proteins SecDF. Other proteins may also be involved. The cofactor is Zn(2+).

Its subcellular location is the cell membrane. It is found in the cytoplasm. The catalysed reaction is ATP + H2O + cellular proteinSide 1 = ADP + phosphate + cellular proteinSide 2.. Its function is as follows. Part of the Sec protein translocase complex. Interacts with the SecYEG preprotein conducting channel. Has a central role in coupling the hydrolysis of ATP to the transfer of proteins into and across the cell membrane, serving as an ATP-driven molecular motor driving the stepwise translocation of polypeptide chains across the membrane. In Enterococcus faecalis (strain ATCC 700802 / V583), this protein is Protein translocase subunit SecA.